The chain runs to 199 residues: Ribonuclease HII (199 aa).

The 190-residue stretch at 10–199 folds into the RNase H type-2 domain; that stretch reads RIEAGCDEAG…LLPEQLTLGF (190 aa). A divalent metal cation-binding residues include Asp-16, Glu-17, and Asp-108.

It belongs to the RNase HII family. The cofactor is Mn(2+). Requires Mg(2+) as cofactor.

The protein localises to the cytoplasm. The catalysed reaction is Endonucleolytic cleavage to 5'-phosphomonoester.. In terms of biological role, endonuclease that specifically degrades the RNA of RNA-DNA hybrids. In Parabacteroides distasonis (strain ATCC 8503 / DSM 20701 / CIP 104284 / JCM 5825 / NCTC 11152), this protein is Ribonuclease HII.